The chain runs to 458 residues: tRNA modification GTPase MnmE (458 aa).

Positions 23, 80, and 122 each coordinate (6S)-5-formyl-5,6,7,8-tetrahydrofolate. Positions 218-380 constitute a TrmE-type G domain; that stretch reads GMKIVIAGRP…LREHLQQTMG (163 aa). Asn-228 lines the K(+) pocket. GTP is bound by residues 228–233, 247–253, 272–275, and 361–363; these read NVGKSS, TQIPGTT, DTAG, and SAR. Position 232 (Ser-232) interacts with Mg(2+). K(+) contacts are provided by Thr-247, Ile-249, and Thr-252. Thr-253 contributes to the Mg(2+) binding site. Residue Lys-458 participates in (6S)-5-formyl-5,6,7,8-tetrahydrofolate binding.

The protein belongs to the TRAFAC class TrmE-Era-EngA-EngB-Septin-like GTPase superfamily. TrmE GTPase family. As to quaternary structure, homodimer. Heterotetramer of two MnmE and two MnmG subunits. K(+) serves as cofactor.

Its subcellular location is the cytoplasm. Its function is as follows. Exhibits a very high intrinsic GTPase hydrolysis rate. Involved in the addition of a carboxymethylaminomethyl (cmnm) group at the wobble position (U34) of certain tRNAs, forming tRNA-cmnm(5)s(2)U34. The protein is tRNA modification GTPase MnmE of Hamiltonella defensa subsp. Acyrthosiphon pisum (strain 5AT).